A 107-amino-acid chain; its full sequence is uncharacterized protein (107 aa).

This is an uncharacterized protein from Autographa californica nuclear polyhedrosis virus (AcMNPV).